A 215-amino-acid chain; its full sequence is Ribonuclease T (215 aa).

In terms of domain architecture, Exonuclease spans 20-194 (VVIDVETAGF…YDTERTAVLF (175 aa)). Mg(2+)-binding residues include D23, E25, H181, and D186. The active-site Proton donor/acceptor is the H181.

It belongs to the RNase T family. As to quaternary structure, homodimer. Mg(2+) serves as cofactor.

In terms of biological role, trims short 3' overhangs of a variety of RNA species, leaving a one or two nucleotide 3' overhang. Responsible for the end-turnover of tRNA: specifically removes the terminal AMP residue from uncharged tRNA (tRNA-C-C-A). Also appears to be involved in tRNA biosynthesis, especially in strains lacking other exoribonucleases. Its function is as follows. A general regulator of small RNAs (sRNA), contributes to their degradation. Upon overexpression suppresses sRNA-mediated RhyB-silencing of multiple RNA targets; overexpression leads to nearly complete loss of RhyB sRNA. This is Ribonuclease T from Escherichia coli (strain K12).